A 359-amino-acid polypeptide reads, in one-letter code: E3 ubiquitin-protein ligase RNF146 (359 aa).

The RING-type zinc-finger motif lies at 37–75 (CAICLQTCVHPVSLPCKHVFCYLCVKGASWLGKRCALCR). Glycyl lysine isopeptide (Lys-Gly) (interchain with G-Cter in ubiquitin) cross-links involve residues Lys85 and Lys95. The WWE domain occupies 92–168 (EELKAASRGN…EHGRRRKIKR (77 aa)). A glycoprotein-binding residues include Tyr108, Arg111, and Trp115. Lys131 is covalently cross-linked (Glycyl lysine isopeptide (Lys-Gly) (interchain with G-Cter in ubiquitin)). A glycoprotein contacts are provided by Tyr145, Gln154, Arg164, and Lys176. Residue Lys176 forms a Glycyl lysine isopeptide (Lys-Gly) (interchain with G-Cter in ubiquitin) linkage. Positions 254–359 (GDNTAERSHR…PDGQCTVTEV (106 aa)) are disordered. Positions 284–298 (SIEETESDASSDSED) are enriched in acidic residues. Ser290 and Ser294 each carry phosphoserine. The segment covering 306–323 (HSLTQQRLLVSNANQTVP) has biased composition (polar residues).

As to quaternary structure, can form homooligomers. Interacts with PARsylated AXIN1, AXIN2, BLZF1, CASC3, H1-2, IPO7, LIG3, NCL, PARP1, XRCC1, XRCC5 and XRCC6. Interacts with DDB1, DHX15, IQGAP1, LRPPRC, PARP2, PRKDC, RUVBL2, TNKS1 and TNKS2. Binding often leads to interactor ubiquitination, in the presence of the appropriate E1 and E2 enzymes, and proteasomal degradation. Post-translationally, ubiquitinated; autoubiquitinated. Polyubiquitinated in the presence of UBE2D1, UBE2D2 and UBE2D3. Multimonoubiquitinated in the presence of UBE2E1. Not ubiquitinated in the presence of UBE2H, CDC34, UBE2L3, UBE2L6, nor UBE2C. In the absence of PAR, autoubiquitination occurs on Lys-85, Lys-95 and Lys-176 via 'Lys-11' and 'Lys-48' ubiquitin linkages. In the presence of PAR, Lys-131 and Lys-176 are ubiquitinated via 'Lys-6', 'Lys-33' and 'Lys-48' ubiquitin linkages. Autoubiquitination is enhanced upon PAR-binding. In terms of tissue distribution, ubiquitously expressed. Up-regulated in brains from patients with Alzheimer disease.

The protein localises to the cytoplasm. It localises to the cytosol. It is found in the nucleus. It carries out the reaction S-ubiquitinyl-[E2 ubiquitin-conjugating enzyme]-L-cysteine + [acceptor protein]-L-lysine = [E2 ubiquitin-conjugating enzyme]-L-cysteine + N(6)-ubiquitinyl-[acceptor protein]-L-lysine.. Its pathway is protein modification; protein ubiquitination. In terms of biological role, E3 ubiquitin-protein ligase that specifically binds poly-ADP-ribosylated (PARsylated) proteins and mediates their ubiquitination and subsequent degradation. May regulate many important biological processes, such as cell survival and DNA damage response. Acts as an activator of the Wnt signaling pathway by mediating the ubiquitination of PARsylated AXIN1 and AXIN2, 2 key components of the beta-catenin destruction complex. Acts in cooperation with tankyrase proteins (TNKS and TNKS2), which mediate PARsylation of target proteins AXIN1, AXIN2, BLZF1, CASC3, TNKS and TNKS2. Recognizes and binds tankyrase-dependent PARsylated proteins via its WWE domain and mediates their ubiquitination, leading to their degradation. Different ubiquitin linkage types have been observed: TNKS2 undergoes ubiquitination at 'Lys-48' and 'Lys-63', while AXIN1 is only ubiquitinated at 'Lys-48'. May regulate TNKS and TNKS2 subcellular location, preventing aggregation at a centrosomal location. Neuroprotective protein. Protects the brain against N-methyl-D-aspartate (NMDA) receptor-mediated glutamate excitotoxicity and ischemia, by interfering with PAR-induced cell death, called parthanatos. Prevents nuclear translocation of AIFM1 in a PAR-binding dependent manner. Does not affect PARP1 activation. Protects against cell death induced by DNA damaging agents, such as N-methyl-N-nitro-N-nitrosoguanidine (MNNG) and rescues cells from G1 arrest. Promotes cell survival after gamma-irradiation. Facilitates DNA repair. In Homo sapiens (Human), this protein is E3 ubiquitin-protein ligase RNF146 (RNF146).